The following is a 119-amino-acid chain: Large ribosomal subunit protein bL20 (119 aa).

The protein belongs to the bacterial ribosomal protein bL20 family.

Functionally, binds directly to 23S ribosomal RNA and is necessary for the in vitro assembly process of the 50S ribosomal subunit. It is not involved in the protein synthesizing functions of that subunit. The protein is Large ribosomal subunit protein bL20 of Shewanella sediminis (strain HAW-EB3).